The chain runs to 143 residues: Ribonuclease P protein component 2 (143 aa).

The protein belongs to the eukaryotic/archaeal RNase P protein component 2 family. Consists of a catalytic RNA component and at least 4-5 protein subunits.

The protein localises to the cytoplasm. The catalysed reaction is Endonucleolytic cleavage of RNA, removing 5'-extranucleotides from tRNA precursor.. Part of ribonuclease P, a protein complex that generates mature tRNA molecules by cleaving their 5'-ends. This Saccharolobus islandicus (strain L.S.2.15 / Lassen #1) (Sulfolobus islandicus) protein is Ribonuclease P protein component 2.